The chain runs to 459 residues: Alcohol acyl transferase 1 allele GSa (459 aa).

Active-site proton acceptor residues include His-164 and Asn-385.

The protein belongs to the plant acyltransferase family. As to expression, highly expressed in the cortex and skin of ripe fruit.

It carries out the reaction butan-1-ol + acetyl-CoA = butyl acetate + CoA. The enzyme catalyses butan-1-ol + butanoyl-CoA = butyl butanoate + CoA. It catalyses the reaction butan-1-ol + hexanoyl-CoA = butyl hexanoate + CoA. The catalysed reaction is hexan-1-ol + butanoyl-CoA = hexyl butanoate + CoA. It carries out the reaction hexan-1-ol + acetyl-CoA = hexyl acetate + CoA. The enzyme catalyses 2-methylbutan-1-ol + butanoyl-CoA = 2-methylbutyl butanoate + CoA. It catalyses the reaction ethanol + butanoyl-CoA = ethyl butanoate + CoA. The catalysed reaction is hexanoyl-CoA + ethanol = ethyl hexanoate + CoA. In terms of biological role, involved in the biosynthesis of volatile esters which confer ripe apple fruit flavor. Alcohol acyl transferase that can use a wide range of alcohols as substrate, including 2-methylbutanol, hexanol and ethanol, to produce esters such as butyl butanoate, butyl hexanoate, hexyl butanoate, ethyl butanoate and ethyl hexanoate and, to some extent, 2-methylbutyl acetate (2MBA), butyl acetate, hexyl acetate and 2-methylbutyl butanoate (2MBB). The chain is Alcohol acyl transferase 1 allele GSa from Malus domestica (Apple).